We begin with the raw amino-acid sequence, 101 residues long: Putative pterin-4-alpha-carbinolamine dehydratase (101 aa).

This sequence belongs to the pterin-4-alpha-carbinolamine dehydratase family.

It carries out the reaction (4aS,6R)-4a-hydroxy-L-erythro-5,6,7,8-tetrahydrobiopterin = (6R)-L-erythro-6,7-dihydrobiopterin + H2O. In Rhizobium rhizogenes (strain K84 / ATCC BAA-868) (Agrobacterium radiobacter), this protein is Putative pterin-4-alpha-carbinolamine dehydratase.